We begin with the raw amino-acid sequence, 498 residues long: Probable malate:quinone oxidoreductase 2 (498 aa).

This sequence belongs to the MQO family. It depends on FAD as a cofactor.

It carries out the reaction (S)-malate + a quinone = a quinol + oxaloacetate. The protein operates within carbohydrate metabolism; tricarboxylic acid cycle; oxaloacetate from (S)-malate (quinone route): step 1/1. This chain is Probable malate:quinone oxidoreductase 2, found in Staphylococcus epidermidis (strain ATCC 12228 / FDA PCI 1200).